A 333-amino-acid polypeptide reads, in one-letter code: Probable endo-beta-1,4-glucanase B (333 aa).

Residues 1–17 (MKFRNLFFAAVAGSAVA) form the signal peptide. Asn37 and Asn100 each carry an N-linked (GlcNAc...) asparagine glycan. The active-site Proton donor is Glu160. Glu267 acts as the Nucleophile in catalysis.

The protein belongs to the glycosyl hydrolase 5 (cellulase A) family.

Its subcellular location is the secreted. It catalyses the reaction Endohydrolysis of (1-&gt;4)-beta-D-glucosidic linkages in cellulose, lichenin and cereal beta-D-glucans.. Has endoglucanase activity on substrates containing beta-1,4 glycosidic bonds, like in carboxymethylcellulose (CMC), hydroxyethylcellulose (HEC) and beta-glucan. Involved in the degradation of complex natural cellulosic substrates. The sequence is that of Probable endo-beta-1,4-glucanase B (eglB) from Aspergillus oryzae (strain ATCC 42149 / RIB 40) (Yellow koji mold).